Consider the following 994-residue polypeptide: Valine--tRNA ligase (994 aa).

The 'HIGH' region motif lies at 43-53 (PNVTGTLHMGH). The interval 332–356 (IASGATSDTTDTPSDSDASNASNQH) is disordered. Residues 333–353 (ASGATSDTTDTPSDSDASNAS) show a composition bias toward low complexity. A 'KMSKS' region motif is present at residues 585–589 (KMSKS). Residue K588 participates in ATP binding. The interval 691–713 (TAHSPAQHQAGQDGQDVPRTPQP) is disordered. Positions 928–994 (LIDVDAERAR…NGLRERRTTL (67 aa)) form a coiled coil.

It belongs to the class-I aminoacyl-tRNA synthetase family. ValS type 1 subfamily. In terms of assembly, monomer.

It is found in the cytoplasm. It carries out the reaction tRNA(Val) + L-valine + ATP = L-valyl-tRNA(Val) + AMP + diphosphate. In terms of biological role, catalyzes the attachment of valine to tRNA(Val). As ValRS can inadvertently accommodate and process structurally similar amino acids such as threonine, to avoid such errors, it has a 'posttransfer' editing activity that hydrolyzes mischarged Thr-tRNA(Val) in a tRNA-dependent manner. The chain is Valine--tRNA ligase from Xylella fastidiosa (strain M23).